Here is a 202-residue protein sequence, read N- to C-terminus: Dephospho-CoA kinase (202 aa).

The 197-residue stretch at 6–202 (KVSITGDLSS…EYFYALKGAL (197 aa)) folds into the DPCK domain. An ATP-binding site is contributed by 14 to 19 (SSGKTE).

The protein belongs to the CoaE family.

The protein resides in the cytoplasm. It catalyses the reaction 3'-dephospho-CoA + ATP = ADP + CoA + H(+). It functions in the pathway cofactor biosynthesis; coenzyme A biosynthesis; CoA from (R)-pantothenate: step 5/5. Catalyzes the phosphorylation of the 3'-hydroxyl group of dephosphocoenzyme A to form coenzyme A. This is Dephospho-CoA kinase from Chlamydia pneumoniae (Chlamydophila pneumoniae).